The chain runs to 230 residues: Urease accessory protein UreF (230 aa).

This sequence belongs to the UreF family. In terms of assembly, ureD, UreF and UreG form a complex that acts as a GTP-hydrolysis-dependent molecular chaperone, activating the urease apoprotein by helping to assemble the nickel containing metallocenter of UreC. The UreE protein probably delivers the nickel.

It is found in the cytoplasm. Required for maturation of urease via the functional incorporation of the urease nickel metallocenter. The protein is Urease accessory protein UreF of Allorhizobium ampelinum (strain ATCC BAA-846 / DSM 112012 / S4) (Agrobacterium vitis (strain S4)).